Here is a 186-residue protein sequence, read N- to C-terminus: Large ribosomal subunit protein uL22 (186 aa).

The disordered stretch occupies residues 159 to 186 (KATDEEPTKKKLSKKKLQRQKEKMMRSE). The span at 177–186 (RQKEKMMRSE) shows a compositional bias: basic and acidic residues.

It belongs to the universal ribosomal protein uL22 family.

This Phlebotomus papatasi (Sandfly) protein is Large ribosomal subunit protein uL22 (RpL17).